The sequence spans 172 residues: Ribosome maturation factor RimM (172 aa).

The region spanning Asp-97–Leu-170 is the PRC barrel domain.

Belongs to the RimM family. Binds ribosomal protein uS19.

The protein localises to the cytoplasm. Functionally, an accessory protein needed during the final step in the assembly of 30S ribosomal subunit, possibly for assembly of the head region. Essential for efficient processing of 16S rRNA. May be needed both before and after RbfA during the maturation of 16S rRNA. It has affinity for free ribosomal 30S subunits but not for 70S ribosomes. This is Ribosome maturation factor RimM from Leuconostoc citreum (strain KM20).